A 159-amino-acid polypeptide reads, in one-letter code: Small ribosomal subunit protein uS7c (159 aa).

It belongs to the universal ribosomal protein uS7 family. Part of the 30S ribosomal subunit.

It localises to the plastid. The protein localises to the chloroplast. One of the primary rRNA binding proteins, it binds directly to 16S rRNA where it nucleates assembly of the head domain of the 30S subunit. This is Small ribosomal subunit protein uS7c (rps7) from Bigelowiella natans (Pedinomonas minutissima).